The following is an 84-amino-acid chain: Large ribosomal subunit protein bL27 (84 aa).

The segment at 1–29 is disordered; it reads MAHKKGGGSTKNGRDSNPKYLGIKASGGS.

Belongs to the bacterial ribosomal protein bL27 family.

This is Large ribosomal subunit protein bL27 from Chlorobium phaeobacteroides (strain BS1).